We begin with the raw amino-acid sequence, 310 residues long: Olfactory receptor 5AR1 (310 aa).

Residues 1–28 (MDKENSSMVTEFIFMGITQDPQMEIIFF) are Extracellular-facing. An N-linked (GlcNAc...) asparagine glycan is attached at asparagine 5. Residues 29 to 49 (VVFLIVYLVNVVGNIGMIILI) form a helical membrane-spanning segment. At 50–58 (TTDTQLHTP) the chain is on the cytoplasmic side. The chain crosses the membrane as a helical span at residues 59–79 (MYFFLCNLSFVDLGYSSAIAP). The Extracellular portion of the chain corresponds to 80 to 100 (RMLADFLTNHKVISFSSCATQ). Cysteine 97 and cysteine 189 form a disulfide bridge. A helical membrane pass occupies residues 101–120 (FAFFVGFVDAECYVLAAMAY). At 121-139 (GRFVAICRPLHYSTFMSKQ) the chain is on the cytoplasmic side. The chain crosses the membrane as a helical span at residues 140–160 (VCLALMLGSYLAGLVSLVAHT). The Extracellular segment spans residues 161-205 (TLTFSLSYCGSNIINHFFCEIPPLLALSCSDTYISEILLFSLCGF). A helical membrane pass occupies residues 206-226 (IEFSTILIIFISYTFILVAII). Residues 227-239 (RMRSAEGRLKAFS) are Cytoplasmic-facing. The chain crosses the membrane as a helical span at residues 240 to 260 (TCGSHLTGITLFYGTVMFMYL). The Extracellular segment spans residues 261-271 (RPTSSYSLDQD). Residues 272-292 (KWASVFYTVIIPMLNPLIYSL) traverse the membrane as a helical segment. Residues 293–310 (RNKDVKAAFKKLIGKKSQ) are Cytoplasmic-facing.

Belongs to the G-protein coupled receptor 1 family.

The protein localises to the cell membrane. In terms of biological role, odorant receptor. In Homo sapiens (Human), this protein is Olfactory receptor 5AR1.